The following is a 168-amino-acid chain: G/U mismatch-specific DNA glycosylase (168 aa).

It belongs to the uracil-DNA glycosylase (UDG) superfamily. TDG/mug family. As to quaternary structure, binds DNA as a monomer.

The protein localises to the cytoplasm. The enzyme catalyses Specifically hydrolyzes mismatched double-stranded DNA and polynucleotides, releasing free uracil.. Excises ethenocytosine and uracil, which can arise by alkylation or deamination of cytosine, respectively, from the corresponding mispairs with guanine in ds-DNA. It is capable of hydrolyzing the carbon-nitrogen bond between the sugar-phosphate backbone of the DNA and the mispaired base. The complementary strand guanine functions in substrate recognition. Required for DNA damage lesion repair in stationary-phase cells. In Citrobacter koseri (strain ATCC BAA-895 / CDC 4225-83 / SGSC4696), this protein is G/U mismatch-specific DNA glycosylase.